Here is a 62-residue protein sequence, read N- to C-terminus: Sperm protamine P1 (62 aa).

Residues 1 to 62 (MARYRRRSRS…RYSRRGRRRY (62 aa)) are disordered.

This sequence belongs to the protamine P1 family. As to expression, testis.

The protein localises to the nucleus. It localises to the chromosome. In terms of biological role, protamines substitute for histones in the chromatin of sperm during the haploid phase of spermatogenesis. They compact sperm DNA into a highly condensed, stable and inactive complex. The sequence is that of Sperm protamine P1 (PRM1) from Sarcophilus harrisii (Tasmanian devil).